A 168-amino-acid chain; its full sequence is Ribosome maturation factor RimM (168 aa).

The region spanning 95–168 (KEGDYYWTDL…IIVVEWDADF (74 aa)) is the PRC barrel domain.

This sequence belongs to the RimM family. As to quaternary structure, binds ribosomal protein uS19.

The protein resides in the cytoplasm. Functionally, an accessory protein needed during the final step in the assembly of 30S ribosomal subunit, possibly for assembly of the head region. Essential for efficient processing of 16S rRNA. May be needed both before and after RbfA during the maturation of 16S rRNA. It has affinity for free ribosomal 30S subunits but not for 70S ribosomes. In Coxiella burnetii (strain CbuK_Q154) (Coxiella burnetii (strain Q154)), this protein is Ribosome maturation factor RimM.